The following is a 771-amino-acid chain: Tubulin monoglycylase TTLL3 (771 aa).

Residues 70-106 (PRPSFSQPRRHDHETETTDEGDSSDEDDLGEEVERDD) are disordered. Acidic residues predominate over residues 86–106 (TTDEGDSSDEDDLGEEVERDD). The region spanning 220–566 (EGEKMGEVHN…RRSERNTDTG (347 aa)) is the TTL domain. Residues lysine 339, 345–346 (RG), 377–380 (QKYI), 390–392 (KFD), and 434–435 (CN) contribute to the ATP site. Arginine 345 contacts a protein. Position 437 (serine 437) interacts with L-glutamate. Mg(2+)-binding residues include aspartate 512, glutamate 525, and asparagine 527. Glutamate 525 lines the ATP pocket. 2 disordered regions span residues 605–640 (LIQSHPEPLSKSTNHKSSLLSSPCTSGKENQSEEVK) and 682–713 (TELHHPQRLSHTQPQSDRPHTHRTRSNLPTLY). Over residues 614–633 (SKSTNHKSSLLSSPCTSGKE) the composition is skewed to polar residues.

The cofactor is Mg(2+).

Its subcellular location is the cytoplasm. The protein localises to the cytoskeleton. It localises to the cell projection. It is found in the cilium. The protein resides in the cilium axoneme. Its subcellular location is the flagellum axoneme. The enzyme catalyses L-glutamyl-[protein] + glycine + ATP = glycyl-L-glutamyl-[protein] + ADP + phosphate + H(+). Monoglycylase which modifies alpha- and beta-tubulin, adding a single glycine on the gamma-carboxyl groups of specific glutamate residues to generate monoglycine side chains within the C-terminal tail of tubulin. Not involved in elongation step of the polyglycylation reaction. Preferentially glycylates a beta-tail peptide over the alpha-tail, although shifts its preference toward alpha-tail as beta-tail glutamylation increases. Competes with polyglutamylases for modification site on beta-tubulin substrate, thereby creating an anticorrelation between glycylation and glutamylation reactions. Not involved in elongation step of the polyglycylation reaction. This is Tubulin monoglycylase TTLL3 (ttll3) from Danio rerio (Zebrafish).